The primary structure comprises 308 residues: Serpentine receptor class V-1 (308 aa).

7 helical membrane-spanning segments follow: residues 15-35 (VSTA…YILF), 46-68 (PFFR…STFF), 88-108 (VVPI…IIFI), 135-155 (LLLI…STDF), 184-204 (AMVD…AIFI), 222-242 (LALS…CSLL), and 256-276 (TMWF…LLAL).

Belongs to the nematode receptor-like protein srv family.

It is found in the membrane. This chain is Serpentine receptor class V-1 (srv-1), found in Caenorhabditis elegans.